The following is a 135-amino-acid chain: Helix-loop-helix protein 2 (135 aa).

Residues 1-80 (MMLSPDQAAD…RRRATAKYRS (80 aa)) form a disordered region. Over residues 10 to 21 (DSDHPSSAHSDP) the composition is skewed to basic and acidic residues. The segment covering 68–80 (KRRRRRATAKYRS) has biased composition (basic residues). In terms of domain architecture, bHLH spans 77 to 129 (KYRSAHATRERIRVEAFNLAFAELRKLLPTLPPDKKLSKIEILRLAICYISYL).

In terms of assembly, homodimer. Interacts and may form heterodimers with STAT3.

It localises to the nucleus. Transcription factor which binds the E box motif 5'-CA[TC][AG]TG-3'. Involved in regulating energy expenditure, body mass, voluntary physical activity, mating behavior and reproductive longevity, acting through the hypothalamic-pituitary-gonadal axis. Acts as a transcriptional activator of target genes, including NDN, PCSK1, MC4R. Is also a transcriptional activator of KISS1. May act centrally to regulate function of both white and brown adipose tissue. Together with NHLH1, required to maintain migration and survival of cells in the anterior extramural migration stream (aes), which forms the precerebellar nuclei. Also, in concert with NHLH1, may determine fate of gonadotropin releasing hormone-1 (GnRH-1) neurons. In Homo sapiens (Human), this protein is Helix-loop-helix protein 2 (NHLH2).